We begin with the raw amino-acid sequence, 362 residues long: Red-sensitive opsin (362 aa).

Residues 1 to 49 (MAAWEAAFAARRRHEEEDTTRDSVFTYTNSNNTRGPFEGPNYHIAPRWV) are Extracellular-facing. Residue Asn-31 is glycosylated (N-linked (GlcNAc...) asparagine). The helical transmembrane segment at 50–74 (YNLTSVWMIFVVAASVFTNGLVLVA) threads the bilayer. The Cytoplasmic segment spans residues 75 to 86 (TWKFKKLRHPLN). Residues 87–112 (WILVNLAVADLGETVIASTISVINQI) form a helical membrane-spanning segment. Residues 113–126 (SGYFILGHPMCVVE) are Extracellular-facing. A disulfide bridge connects residues Cys-123 and Cys-200. A helical membrane pass occupies residues 127–146 (GYTVSACGITALWSLAIISW). Residues 147 to 165 (ERWFVVCKPFGNIKFDGKL) are Cytoplasmic-facing. Residues 166–189 (AVAGILFSWLWSCAWTAPPIFGWS) traverse the membrane as a helical segment. At 190 to 215 (RYWPHGLKTSCGPDVFSGSSDPGVQS) the chain is on the extracellular side. The helical transmembrane segment at 216–243 (YMVVLMVTCCFFPLAIIILCYLQVWLAI) threads the bilayer. The Cytoplasmic segment spans residues 244 to 265 (RAVAAQQKESESTQKAEKEVSR). A helical membrane pass occupies residues 266–289 (MVVVMIVAYCFCWGPYTFFACFAA). At 290 to 297 (ANPGYAFH) the chain is on the extracellular side. The chain crosses the membrane as a helical span at residues 298–322 (PLAAALPAYFAKSATIYNPIIYVFM). Position 309 is an N6-(retinylidene)lysine (Lys-309). The Cytoplasmic portion of the chain corresponds to 323 to 362 (NRQFRNCILQLFGKKVDDGSEVSTSRTEVSSVSNSSVSPA).

Belongs to the G-protein coupled receptor 1 family. Opsin subfamily. Phosphorylated on some or all of the serine and threonine residues present in the C-terminal region. As to expression, the color pigments are found in the cone photoreceptor cells.

It is found in the membrane. Functionally, visual pigments are the light-absorbing molecules that mediate vision. They consist of an apoprotein, opsin, covalently linked to cis-retinal. This chain is Red-sensitive opsin, found in Gallus gallus (Chicken).